A 579-amino-acid polypeptide reads, in one-letter code: General transcriptional corepressor tupA (579 aa).

A compositionally biased stretch (polar residues) spans 83–101 (NINASQRDLNSPSTFRSNS). The disordered stretch occupies residues 83–258 (NINASQRDLN…ENGKEKGTDW (176 aa)). 3 stretches are compositionally biased toward low complexity: residues 109 to 128 (NNNN…NNNN), 157 to 198 (QQPG…LSPL), and 207 to 224 (MGNN…NNNN). A compositionally biased stretch (basic and acidic residues) spans 227-256 (KKPDMEEVKEEDRRRHDTEMSEENGKEKGT). WD repeat units lie at residues 279–319 (QHNS…HAFV), 325–364 (DGDL…IQHT), 367–406 (GHEL…CAFT), 413–452 (GPKN…FLER), 455–494 (GHLD…SRSR), 501–540 (GHKD…THMM), and 543–579 (GHKN…KYDS).

This sequence belongs to the WD repeat TUP1 family. Associates with trfA to form the trfA-tupA corepressor complex.

It is found in the nucleus. Its function is as follows. Acts as a component of the trfA-tupA corepressor complex which is involved in the repression of many genes in a wide variety of physiological processes. May also be involved in the derepression of at least some target genes. The complex is recruited to target genes by interaction with DNA-bound transcriptional repressors. The complex recruits histone deacetylases to produce a repressive chromatin structure, interacts with hypoacetylated N-terminal tails of histones H3 and H4 that have been programmed for repression by the action of histone deacetylases and interferes directly with the transcriptional machinery by associating with the RNA polymerase II mediator complex. This Dictyostelium discoideum (Social amoeba) protein is General transcriptional corepressor tupA (tupA).